Reading from the N-terminus, the 248-residue chain is Adenosylcobinamide-GDP ribazoletransferase (248 aa).

The next 6 membrane-spanning stretches (helical) occupy residues 36 to 56, 59 to 79, 114 to 134, 137 to 157, 170 to 190, and 199 to 219; these read FFLP…YLGL, FLPA…VTGG, GTIA…SLVL, YSIA…FLCL, IFIG…ILAL, and ATII…LLCL.

It belongs to the CobS family. It depends on Mg(2+) as a cofactor.

It localises to the cell membrane. The catalysed reaction is alpha-ribazole + adenosylcob(III)inamide-GDP = adenosylcob(III)alamin + GMP + H(+). It carries out the reaction alpha-ribazole 5'-phosphate + adenosylcob(III)inamide-GDP = adenosylcob(III)alamin 5'-phosphate + GMP + H(+). It participates in cofactor biosynthesis; adenosylcobalamin biosynthesis; adenosylcobalamin from cob(II)yrinate a,c-diamide: step 7/7. Joins adenosylcobinamide-GDP and alpha-ribazole to generate adenosylcobalamin (Ado-cobalamin). Also synthesizes adenosylcobalamin 5'-phosphate from adenosylcobinamide-GDP and alpha-ribazole 5'-phosphate. The chain is Adenosylcobinamide-GDP ribazoletransferase from Clostridium botulinum (strain Kyoto / Type A2).